A 282-amino-acid polypeptide reads, in one-letter code: Pantothenate synthetase (282 aa).

Residue 30-37 (MGYLHEGH) coordinates ATP. His-37 acts as the Proton donor in catalysis. Gln-61 is a binding site for (R)-pantoate. Gln-61 contributes to the beta-alanine binding site. 147–150 (GQKD) serves as a coordination point for ATP. Position 153 (Gln-153) interacts with (R)-pantoate. Residues Val-176 and 184 to 187 (MSSR) each bind ATP.

The protein belongs to the pantothenate synthetase family. Homodimer.

It localises to the cytoplasm. The enzyme catalyses (R)-pantoate + beta-alanine + ATP = (R)-pantothenate + AMP + diphosphate + H(+). The protein operates within cofactor biosynthesis; (R)-pantothenate biosynthesis; (R)-pantothenate from (R)-pantoate and beta-alanine: step 1/1. In terms of biological role, catalyzes the condensation of pantoate with beta-alanine in an ATP-dependent reaction via a pantoyl-adenylate intermediate. This Pelotomaculum thermopropionicum (strain DSM 13744 / JCM 10971 / SI) protein is Pantothenate synthetase.